The following is a 339-amino-acid chain: DNA-directed RNA polymerase subunit alpha (339 aa).

An alpha N-terminal domain (alpha-NTD) region spans residues 1 to 235; that stretch reads MTIQKNWQEL…DQLNVFVNFE (235 aa). The segment at 251–339 is alpha C-terminal domain (alpha-CTD); it reads FNPAFLKKVD…ELAKRFEDHY (89 aa).

It belongs to the RNA polymerase alpha chain family. Homodimer. The RNAP catalytic core consists of 2 alpha, 1 beta, 1 beta' and 1 omega subunit. When a sigma factor is associated with the core the holoenzyme is formed, which can initiate transcription.

It catalyses the reaction RNA(n) + a ribonucleoside 5'-triphosphate = RNA(n+1) + diphosphate. Its function is as follows. DNA-dependent RNA polymerase catalyzes the transcription of DNA into RNA using the four ribonucleoside triphosphates as substrates. The sequence is that of DNA-directed RNA polymerase subunit alpha from Rhodopseudomonas palustris (strain BisB5).